A 43-amino-acid polypeptide reads, in one-letter code: Cytochrome b559 subunit beta (43 aa).

The chain crosses the membrane as a helical span at residues tryptophan 18–alanine 34. Heme is bound at residue histidine 22.

Belongs to the PsbE/PsbF family. As to quaternary structure, heterodimer of an alpha subunit and a beta subunit. PSII is composed of 1 copy each of membrane proteins PsbA, PsbB, PsbC, PsbD, PsbE, PsbF, PsbH, PsbI, PsbJ, PsbK, PsbL, PsbM, PsbT, PsbX, PsbY, PsbZ, Psb30/Ycf12, peripheral proteins PsbO, CyanoQ (PsbQ), PsbU, PsbV and a large number of cofactors. It forms dimeric complexes. It depends on heme b as a cofactor.

Its subcellular location is the cellular thylakoid membrane. Functionally, this b-type cytochrome is tightly associated with the reaction center of photosystem II (PSII). PSII is a light-driven water:plastoquinone oxidoreductase that uses light energy to abstract electrons from H(2)O, generating O(2) and a proton gradient subsequently used for ATP formation. It consists of a core antenna complex that captures photons, and an electron transfer chain that converts photonic excitation into a charge separation. The polypeptide is Cytochrome b559 subunit beta (Synechococcus sp. (strain JA-2-3B'a(2-13)) (Cyanobacteria bacterium Yellowstone B-Prime)).